Consider the following 368-residue polypeptide: 2-aminoethylphosphonate--pyruvate transaminase (368 aa).

At K192 the chain carries N6-(pyridoxal phosphate)lysine.

This sequence belongs to the class-V pyridoxal-phosphate-dependent aminotransferase family. PhnW subfamily. Homodimer. Pyridoxal 5'-phosphate is required as a cofactor.

The catalysed reaction is (2-aminoethyl)phosphonate + pyruvate = phosphonoacetaldehyde + L-alanine. Involved in phosphonate degradation. In Pseudomonas putida (strain ATCC 700007 / DSM 6899 / JCM 31910 / BCRC 17059 / LMG 24140 / F1), this protein is 2-aminoethylphosphonate--pyruvate transaminase.